The primary structure comprises 488 residues: Ribulose bisphosphate carboxylase large chain (488 aa).

Positions 127 and 177 each coordinate substrate. Lys-179 (proton acceptor) is an active-site residue. Lys-181 is a binding site for substrate. Mg(2+) contacts are provided by Lys-205, Asp-207, and Glu-208. Position 205 is an N6-carboxylysine (Lys-205). His-297 serves as the catalytic Proton acceptor. Substrate is bound by residues Arg-298, His-330, and Ser-382.

It belongs to the RuBisCO large chain family. Type I subfamily. In terms of assembly, heterohexadecamer of 8 large chains and 8 small chains. It depends on Mg(2+) as a cofactor.

The protein resides in the plastid. It is found in the chloroplast. It carries out the reaction 2 (2R)-3-phosphoglycerate + 2 H(+) = D-ribulose 1,5-bisphosphate + CO2 + H2O. The enzyme catalyses D-ribulose 1,5-bisphosphate + O2 = 2-phosphoglycolate + (2R)-3-phosphoglycerate + 2 H(+). Functionally, ruBisCO catalyzes two reactions: the carboxylation of D-ribulose 1,5-bisphosphate, the primary event in carbon dioxide fixation, as well as the oxidative fragmentation of the pentose substrate in the photorespiration process. Both reactions occur simultaneously and in competition at the same active site. This is Ribulose bisphosphate carboxylase large chain from Chrysotila carterae (Marine alga).